The chain runs to 431 residues: Sulfide dehydrogenase [flavocytochrome c] flavoprotein chain (431 aa).

The segment at residues 1–30 (MTLNRRDFIKTSGAAVAAVGILGFPHLAFG) is a signal peptide (tat-type signal). 70–76 (YTCYLSN) lines the FAD pocket. Residues cysteine 191 and cysteine 367 are joined by a disulfide bond.

As to quaternary structure, dimer of one cytochrome and one flavoprotein. Post-translationally, predicted to be exported by the Tat system. The position of the signal peptide cleavage has been experimentally proven.

The protein resides in the periplasm. The enzyme catalyses hydrogen sulfide + 2 Fe(III)-[cytochrome c] = sulfur + 2 Fe(II)-[cytochrome c] + H(+). The polypeptide is Sulfide dehydrogenase [flavocytochrome c] flavoprotein chain (fccB) (Allochromatium vinosum (strain ATCC 17899 / DSM 180 / NBRC 103801 / NCIMB 10441 / D) (Chromatium vinosum)).